The chain runs to 246 residues: 1-(5-phosphoribosyl)-5-[(5-phosphoribosylamino)methylideneamino] imidazole-4-carboxamide isomerase (246 aa).

The active-site Proton acceptor is Asp10. The Proton donor role is filled by Asp135.

This sequence belongs to the HisA/HisF family.

The protein localises to the cytoplasm. The enzyme catalyses 1-(5-phospho-beta-D-ribosyl)-5-[(5-phospho-beta-D-ribosylamino)methylideneamino]imidazole-4-carboxamide = 5-[(5-phospho-1-deoxy-D-ribulos-1-ylimino)methylamino]-1-(5-phospho-beta-D-ribosyl)imidazole-4-carboxamide. It functions in the pathway amino-acid biosynthesis; L-histidine biosynthesis; L-histidine from 5-phospho-alpha-D-ribose 1-diphosphate: step 4/9. This is 1-(5-phosphoribosyl)-5-[(5-phosphoribosylamino)methylideneamino] imidazole-4-carboxamide isomerase from Methanosarcina mazei (strain ATCC BAA-159 / DSM 3647 / Goe1 / Go1 / JCM 11833 / OCM 88) (Methanosarcina frisia).